The following is a 487-amino-acid chain: 3-octaprenyl-4-hydroxybenzoate carboxy-lyase (487 aa).

Asn172 contacts Mn(2+). Residues 175–177, 189–191, and 194–195 contribute to the prenylated FMN site; these read IYR, RWL, and RG. Glu238 is a binding site for Mn(2+). The Proton donor role is filled by Asp287.

It belongs to the UbiD family. As to quaternary structure, homohexamer. The cofactor is prenylated FMN. Requires Mn(2+) as cofactor.

Its subcellular location is the cell membrane. It carries out the reaction a 4-hydroxy-3-(all-trans-polyprenyl)benzoate + H(+) = a 2-(all-trans-polyprenyl)phenol + CO2. It functions in the pathway cofactor biosynthesis; ubiquinone biosynthesis. In terms of biological role, catalyzes the decarboxylation of 3-octaprenyl-4-hydroxy benzoate to 2-octaprenylphenol, an intermediate step in ubiquinone biosynthesis. This chain is 3-octaprenyl-4-hydroxybenzoate carboxy-lyase, found in Actinobacillus pleuropneumoniae serotype 7 (strain AP76).